The following is a 324-amino-acid chain: Glyoxylate/hydroxypyruvate reductase B (324 aa).

Residues arginine 237 and glutamate 266 contribute to the active site. The active-site Proton donor is histidine 285.

This sequence belongs to the D-isomer specific 2-hydroxyacid dehydrogenase family. GhrB subfamily. Homodimer.

Its subcellular location is the cytoplasm. It catalyses the reaction glycolate + NADP(+) = glyoxylate + NADPH + H(+). The catalysed reaction is (R)-glycerate + NAD(+) = 3-hydroxypyruvate + NADH + H(+). The enzyme catalyses (R)-glycerate + NADP(+) = 3-hydroxypyruvate + NADPH + H(+). In terms of biological role, catalyzes the NADPH-dependent reduction of glyoxylate and hydroxypyruvate into glycolate and glycerate, respectively. The protein is Glyoxylate/hydroxypyruvate reductase B of Salmonella typhi.